The sequence spans 147 residues: Deoxyuridine 5'-triphosphate nucleotidohydrolase (147 aa).

Residues 67–69 (RSG), Asn-80, and 84–86 (TID) each bind substrate.

This sequence belongs to the dUTPase family. The cofactor is Mg(2+).

It catalyses the reaction dUTP + H2O = dUMP + diphosphate + H(+). It participates in pyrimidine metabolism; dUMP biosynthesis; dUMP from dCTP (dUTP route): step 2/2. Its function is as follows. This enzyme is involved in nucleotide metabolism: it produces dUMP, the immediate precursor of thymidine nucleotides and it decreases the intracellular concentration of dUTP so that uracil cannot be incorporated into DNA. This is Deoxyuridine 5'-triphosphate nucleotidohydrolase from Anaplasma marginale (strain St. Maries).